The primary structure comprises 160 residues: Class II hydrophobin 8 (160 aa).

Disulfide bonds link cysteine 92–cysteine 141, cysteine 102–cysteine 132, cysteine 103–cysteine 115, and cysteine 142–cysteine 153.

The protein belongs to the cerato-ulmin hydrophobin family. In terms of assembly, homodimer. Homodimers further self-assemble to form highly ordered films at water-air interfaces through intermolecular interactions.

The protein localises to the secreted. It is found in the cell wall. Functionally, aerial growth, conidiation, and dispersal of filamentous fungi in the environment rely upon a capability of their secreting small amphipathic proteins called hydrophobins (HPBs) with low sequence identity. Class I can self-assemble into an outermost layer of rodlet bundles on aerial cell surfaces, conferring cellular hydrophobicity that supports fungal growth, development and dispersal; whereas Class II form highly ordered films at water-air interfaces through intermolecular interactions but contribute nothing to the rodlet structure. This Trichoderma asperellum (strain ATCC 204424 / CBS 433.97 / NBRC 101777) protein is Class II hydrophobin 8.